The sequence spans 475 residues: 3-isopropylmalate dehydratase large subunit (475 aa).

Residues Cys-353, Cys-414, and Cys-417 each contribute to the [4Fe-4S] cluster site.

Belongs to the aconitase/IPM isomerase family. LeuC type 1 subfamily. In terms of assembly, heterodimer of LeuC and LeuD. [4Fe-4S] cluster is required as a cofactor.

It carries out the reaction (2R,3S)-3-isopropylmalate = (2S)-2-isopropylmalate. It participates in amino-acid biosynthesis; L-leucine biosynthesis; L-leucine from 3-methyl-2-oxobutanoate: step 2/4. Catalyzes the isomerization between 2-isopropylmalate and 3-isopropylmalate, via the formation of 2-isopropylmaleate. This chain is 3-isopropylmalate dehydratase large subunit, found in Marinomonas sp. (strain MWYL1).